The chain runs to 160 residues: Calcium and integrin-binding family member 3 (160 aa).

EF-hand domains are found at residues lysine 39–methionine 74, proline 76–glycine 111, and glutamate 117–phenylalanine 152. Positions 89, 91, 93, 95, 100, 130, 132, 134, 136, and 141 each coordinate Ca(2+).

In terms of assembly, monomer and homodimer. Interacts with ITGA2B (via C-terminus cytoplasmic tail region); the interaction is stabilized/increased in a calcium and magnesium-dependent manner. Interacts with TMC1. In terms of tissue distribution, expressed in heart, liver and inner ear. In the inner ear, expressed in vestibule and basilar membrane cells. Expressed in megakaryocytes and endothelial cells.

In terms of biological role, acts as an auxiliary subunit of the sensory mechanoelectrical transduction (MET) channel in hair cells. Plays a role in regulating hair cell MET channel localization and function. This is Calcium and integrin-binding family member 3 (Cib3) from Mus musculus (Mouse).